Reading from the N-terminus, the 786-residue chain is m7GpppN-mRNA hydrolase dcap-2 (786 aa).

The span at 25-61 (QKQNKSTEEPPSSVQKLLASLQQAQNKSDLSEQPSTS) shows a compositional bias: polar residues. The interval 25 to 148 (QKQNKSTEEP…QQQQQYKGPR (124 aa)) is disordered. The segment covering 62–72 (KPKKNEKRKKA) has biased composition (basic residues). Polar residues-rich tracts occupy residues 101–111 (MQQQAENARIS) and 118–133 (QVST…TAPE). Residues 134-144 (QQNYQQQQQQY) are compositionally biased toward low complexity. One can recognise a Nudix hydrolase domain in the interval 238–366 (STVPTYGAIL…LPAYLQGNKF (129 aa)). The Nudix box signature appears at 273–294 (GKINQAEPPRDAAIRETFEETG). Positions 288 and 292 each coordinate Mg(2+). 2 disordered regions span residues 556–576 (IMHS…TPTA) and 623–655 (ISST…SSQV). 2 stretches are compositionally biased toward polar residues: residues 623–632 (ISSTQKQSIP) and 646–655 (SASLSGSSQV).

The protein belongs to the Nudix hydrolase family. DCP2 subfamily. As to quaternary structure, may be a component of the decapping complex composed of dcap-1 and dcap-2. It depends on Mg(2+) as a cofactor. Requires Mn(2+) as cofactor. Expressed in sensory neurons.

The protein resides in the cytoplasmic granule. It is found in the cytoplasm. It localises to the perinuclear region. It catalyses the reaction a 5'-end (N(7)-methyl 5'-triphosphoguanosine)-ribonucleoside in mRNA + H2O = N(7)-methyl-GDP + a 5'-end phospho-ribonucleoside in mRNA + 2 H(+). It carries out the reaction a 5'-end (N(2),N(2),N(7)-trimethyl 5'-triphosphoguanosine)-ribonucleoside in mRNA + H2O = N(2),N(2),N(7)-trimethyl-GDP + a 5'-end phospho-ribonucleoside in mRNA + 2 H(+). Its activity is regulated as follows. Inhibited by capped and uncapped RNA. Not inhibited by dinucleotide cap or methylated nucleotide analogs. Its function is as follows. Decapping metalloenzyme that catalyzes the cleavage of the cap structure on mRNAs. Removes the 7-methyl guanine cap structure from mRNA molecules, yielding a 5'-phosphorylated mRNA fragment and 7m-GDP. RNA-decapping enzyme although it does not bind the RNA cap. May contribute to gene regulation in multiple RNA pathways including monomethylguanosine- and trimethylguanosine-capped RNAs. In oocytes, may play a role in the response to stress induced by heat shock, osmotic stress and anoxia. Required for the developmental axon guidance and regrowth of PLM touch receptor neurons. Early in embryogenesis, plays a role in ciliary shape formation in sensory neurons. Promotes survival at high temperatures. The sequence is that of m7GpppN-mRNA hydrolase dcap-2 from Caenorhabditis elegans.